Here is a 157-residue protein sequence, read N- to C-terminus: SsrA-binding protein (157 aa).

Belongs to the SmpB family.

Its subcellular location is the cytoplasm. Functionally, required for rescue of stalled ribosomes mediated by trans-translation. Binds to transfer-messenger RNA (tmRNA), required for stable association of tmRNA with ribosomes. tmRNA and SmpB together mimic tRNA shape, replacing the anticodon stem-loop with SmpB. tmRNA is encoded by the ssrA gene; the 2 termini fold to resemble tRNA(Ala) and it encodes a 'tag peptide', a short internal open reading frame. During trans-translation Ala-aminoacylated tmRNA acts like a tRNA, entering the A-site of stalled ribosomes, displacing the stalled mRNA. The ribosome then switches to translate the ORF on the tmRNA; the nascent peptide is terminated with the 'tag peptide' encoded by the tmRNA and targeted for degradation. The ribosome is freed to recommence translation, which seems to be the essential function of trans-translation. The sequence is that of SsrA-binding protein from Chlorobium phaeovibrioides (strain DSM 265 / 1930) (Prosthecochloris vibrioformis (strain DSM 265)).